The primary structure comprises 222 residues: 7-cyano-7-deazaguanine synthase (222 aa).

An ATP-binding site is contributed by 14–24 (FSGGQDSTTCL). C190, C199, C202, and C205 together coordinate Zn(2+).

Belongs to the QueC family. In terms of assembly, homodimer. Zn(2+) serves as cofactor.

It catalyses the reaction 7-carboxy-7-deazaguanine + NH4(+) + ATP = 7-cyano-7-deazaguanine + ADP + phosphate + H2O + H(+). Its pathway is purine metabolism; 7-cyano-7-deazaguanine biosynthesis. Functionally, catalyzes the ATP-dependent conversion of 7-carboxy-7-deazaguanine (CDG) to 7-cyano-7-deazaguanine (preQ(0)). The polypeptide is 7-cyano-7-deazaguanine synthase (Staphylococcus aureus (strain Mu3 / ATCC 700698)).